A 186-amino-acid chain; its full sequence is ADP-ribosylation factor-like protein 8A (186 aa).

The note=Mediates targeting to membranes intramembrane region spans methionine 1–glutamate 19. GTP contacts are provided by residues glutamine 29 to threonine 35, aspartate 71 to glutamine 75, and asparagine 130 to aspartate 133.

The protein belongs to the small GTPase superfamily. Arf family. As to quaternary structure, interacts with PLEKHM1. When GTP-bound, interacts with RUFY3 and RUFY4, but not with RUFY1, nor RUFY2. Ubiquitously expressed.

It localises to the late endosome membrane. It is found in the lysosome membrane. The protein resides in the cytoplasm. The protein localises to the cytoskeleton. Its subcellular location is the spindle. It localises to the cell projection. It is found in the axon. The protein resides in the synapse. Its function is as follows. Plays a role in lysosome motility. In neurons, mediates the anterograde axonal long-range transport of presynaptic lysosome-related vesicles required for presynaptic biogenesis and synaptic function. May play a role in chromosome segregation. The chain is ADP-ribosylation factor-like protein 8A (ARL8A) from Homo sapiens (Human).